A 425-amino-acid chain; its full sequence is tRNA(Ile)-lysidine synthase (425 aa).

27 to 32 (SGGLDS) is a binding site for ATP.

The protein belongs to the tRNA(Ile)-lysidine synthase family.

Its subcellular location is the cytoplasm. It catalyses the reaction cytidine(34) in tRNA(Ile2) + L-lysine + ATP = lysidine(34) in tRNA(Ile2) + AMP + diphosphate + H(+). Functionally, ligates lysine onto the cytidine present at position 34 of the AUA codon-specific tRNA(Ile) that contains the anticodon CAU, in an ATP-dependent manner. Cytidine is converted to lysidine, thus changing the amino acid specificity of the tRNA from methionine to isoleucine. The polypeptide is tRNA(Ile)-lysidine synthase (Streptococcus pneumoniae serotype 19F (strain G54)).